A 439-amino-acid chain; its full sequence is Adenylosuccinate synthetase (439 aa).

GTP-binding positions include 14 to 20 (GDEGKGK) and 42 to 44 (GHT). Aspartate 15 acts as the Proton acceptor in catalysis. Mg(2+) contacts are provided by aspartate 15 and glycine 42. IMP-binding positions include 15 to 18 (DEGK), 40 to 43 (NAGH), threonine 130, arginine 144, glutamine 225, threonine 240, and arginine 304. The active-site Proton donor is the histidine 43. 300–306 (TTTGRRR) serves as a coordination point for substrate. GTP is bound by residues arginine 306, 332 to 334 (KLD), and 414 to 416 (SLG).

This sequence belongs to the adenylosuccinate synthetase family. In terms of assembly, homodimer. Mg(2+) is required as a cofactor.

It is found in the cytoplasm. It carries out the reaction IMP + L-aspartate + GTP = N(6)-(1,2-dicarboxyethyl)-AMP + GDP + phosphate + 2 H(+). Its pathway is purine metabolism; AMP biosynthesis via de novo pathway; AMP from IMP: step 1/2. Its function is as follows. Plays an important role in the de novo pathway of purine nucleotide biosynthesis. Catalyzes the first committed step in the biosynthesis of AMP from IMP. This chain is Adenylosuccinate synthetase, found in Synechococcus sp. (strain CC9902).